Here is a 611-residue protein sequence, read N- to C-terminus: Dihydroxy-acid dehydratase (611 aa).

Aspartate 81 lines the Mg(2+) pocket. Cysteine 122 contacts [2Fe-2S] cluster. Mg(2+) is bound by residues aspartate 123 and lysine 124. Lysine 124 carries the post-translational modification N6-carboxylysine. Cysteine 195 serves as a coordination point for [2Fe-2S] cluster. Glutamate 491 contributes to the Mg(2+) binding site. Serine 517 functions as the Proton acceptor in the catalytic mechanism.

It belongs to the IlvD/Edd family. In terms of assembly, homodimer. [2Fe-2S] cluster is required as a cofactor. The cofactor is Mg(2+).

It carries out the reaction (2R)-2,3-dihydroxy-3-methylbutanoate = 3-methyl-2-oxobutanoate + H2O. It catalyses the reaction (2R,3R)-2,3-dihydroxy-3-methylpentanoate = (S)-3-methyl-2-oxopentanoate + H2O. The protein operates within amino-acid biosynthesis; L-isoleucine biosynthesis; L-isoleucine from 2-oxobutanoate: step 3/4. Its pathway is amino-acid biosynthesis; L-valine biosynthesis; L-valine from pyruvate: step 3/4. In terms of biological role, functions in the biosynthesis of branched-chain amino acids. Catalyzes the dehydration of (2R,3R)-2,3-dihydroxy-3-methylpentanoate (2,3-dihydroxy-3-methylvalerate) into 2-oxo-3-methylpentanoate (2-oxo-3-methylvalerate) and of (2R)-2,3-dihydroxy-3-methylbutanoate (2,3-dihydroxyisovalerate) into 2-oxo-3-methylbutanoate (2-oxoisovalerate), the penultimate precursor to L-isoleucine and L-valine, respectively. This Agrobacterium fabrum (strain C58 / ATCC 33970) (Agrobacterium tumefaciens (strain C58)) protein is Dihydroxy-acid dehydratase.